Here is a 556-residue protein sequence, read N- to C-terminus: Small ribosomal subunit protein bS1 (556 aa).

S1 motif domains lie at threonine 35–glutamine 105, asparagine 120–lysine 183, threonine 204–lysine 272, glycine 289–lysine 359, aspartate 377–lysine 444, and aspartate 461–histidine 525.

This sequence belongs to the bacterial ribosomal protein bS1 family.

Its function is as follows. Binds mRNA; thus facilitating recognition of the initiation point. It is needed to translate mRNA with a short Shine-Dalgarno (SD) purine-rich sequence. The chain is Small ribosomal subunit protein bS1 (rpsA) from Helicobacter pylori (strain ATCC 700392 / 26695) (Campylobacter pylori).